We begin with the raw amino-acid sequence, 927 residues long: Isoleucine--tRNA ligase (927 aa).

Residues 57 to 67 carry the 'HIGH' region motif; the sequence is PFANGNIHMGH. Glu553 is an L-isoleucyl-5'-AMP binding site. The 'KMSKS' region motif lies at 594–598; sequence KMSKS. Lys597 lines the ATP pocket. Zn(2+)-binding residues include Cys886, Cys889, Cys906, and Cys909.

Belongs to the class-I aminoacyl-tRNA synthetase family. IleS type 1 subfamily. In terms of assembly, monomer. It depends on Zn(2+) as a cofactor.

The protein resides in the cytoplasm. It carries out the reaction tRNA(Ile) + L-isoleucine + ATP = L-isoleucyl-tRNA(Ile) + AMP + diphosphate. Catalyzes the attachment of isoleucine to tRNA(Ile). As IleRS can inadvertently accommodate and process structurally similar amino acids such as valine, to avoid such errors it has two additional distinct tRNA(Ile)-dependent editing activities. One activity is designated as 'pretransfer' editing and involves the hydrolysis of activated Val-AMP. The other activity is designated 'posttransfer' editing and involves deacylation of mischarged Val-tRNA(Ile). In Lactobacillus acidophilus (strain ATCC 700396 / NCK56 / N2 / NCFM), this protein is Isoleucine--tRNA ligase.